The chain runs to 355 residues: uncharacterized protein (355 aa).

The helical transmembrane segment at 6-26 threads the bilayer; that stretch reads LLTPYFLLSILSVGVFTATAA.

This sequence belongs to the SUN family.

The protein localises to the membrane. This is an uncharacterized protein from Saccharomyces cerevisiae (strain ATCC 204508 / S288c) (Baker's yeast).